The primary structure comprises 138 residues: Vesicle transport protein GOT1B (138 aa).

At methionine 1 the chain carries N-acetylmethionine. Over 1–9 (MISLTDTQK) the chain is Cytoplasmic. The chain crosses the membrane as a helical span at residues 10-30 (IGMGLTGFGVFFLFFGMILFF). Over 31–32 (DK) the chain is Lumenal. A helical transmembrane segment spans residues 33-53 (ALLAIGNVLFVAGLAFVIGLE). Topologically, residues 54–68 (RTFRFFFQRHKVKAT) are cytoplasmic. Glutamate 90 is a topological domain (lumenal). The helical transmembrane segment at 91–109 (IYGFFLLFRGFFPVVVGFI) threads the bilayer. The Cytoplasmic portion of the chain corresponds to 110–138 (RRVPVLGSLLNLPGIRSFVDKVGESNNMV).

It belongs to the GOT1 family.

It localises to the golgi apparatus membrane. Its function is as follows. May be involved in fusion of ER-derived transport vesicles with the Golgi complex. The sequence is that of Vesicle transport protein GOT1B (Golt1b) from Mus musculus (Mouse).